Reading from the N-terminus, the 655-residue chain is Methyl-accepting chemotaxis protein McpC (655 aa).

Topologically, residues 1–8 (MFKKLHMK) are cytoplasmic. Residues 9 to 29 (IAVFVSIMLIITVVLLMLSSY) traverse the membrane as a helical segment. Topologically, residues 30-276 (LTLKPMITED…LMWISDKMNR (247 aa)) are extracellular. Residues 148–225 (WTEPYKDVVT…SNQGKNISKD (78 aa)) enclose the Cache domain. Residues 277–297 (ANLWISLIALIITIILSYFLA) traverse the membrane as a helical segment. Residues 298 to 350 (KTITGPIQQLIVKTKAVSAGDLTVRAESKSKDEVGILTRDFNLMVENMKEMVE) enclose the HAMP domain. Over 298 to 655 (KTITGPIQQL…LMNTIAKFTL (358 aa)) the chain is Cytoplasmic. The 251-residue stretch at 369–619 (VAAETNETSG…ESAAAAEEVN (251 aa)) folds into the Methyl-accepting transducer domain.

This sequence belongs to the methyl-accepting chemotaxis (MCP) protein family. As to quaternary structure, interacts with FloT. In terms of processing, some glutamine residues are deamidated to glutamate by CheD and subsequently methylated.

The protein resides in the cell membrane. It localises to the membrane raft. Chemotactic-signal transducers respond to changes in the concentration of attractants and repellents in the environment, transduce a signal from the outside to the inside of the cell, and facilitate sensory adaptation through the variation of the level of methylation. All amino acids serve as attractants in B.subtilis, they appear to cause an increase in the turnover methyl groups, leading to methylation of an unidentified acceptor, while repellents have been shown to cause a decrease in methyl group turnover. The methyl groups are added by a methyltransferase and removed by a methylesterase. McpC is required for taxis to cysteine, proline, threonine, glycine, serine, lysine, valine and arginine and for aspartate, glutamine, histidine and glutamate. Primarily mediates response to positive stimulus of PTS carbohydrates. Greatly influences the duration or magnitude of the response to negative PTS carbohydrate stimulus. This chain is Methyl-accepting chemotaxis protein McpC (mcpC), found in Bacillus subtilis (strain 168).